The chain runs to 387 residues: TPR repeat-containing protein SYNPCC7002_A0425 (387 aa).

TPR repeat units follow at residues Leu63–Asn96, Ala97–Asn130, Glu132–Asn164, Ala166–Asn198, Met200–Asp232, Ala233–Asp266, Ser267–Ser300, Glu302–Asp334, and Ala336–Arg368.

The polypeptide is TPR repeat-containing protein SYNPCC7002_A0425 (Picosynechococcus sp. (strain ATCC 27264 / PCC 7002 / PR-6) (Agmenellum quadruplicatum)).